Consider the following 202-residue polypeptide: UPF0056 membrane protein CPn_1010/CP_0843/CPj1010/CpB1048 (202 aa).

Helical transmembrane passes span 7-27 (LSLL…FVAL), 39-59 (VILR…TFGR), 61-81 (FFQF…FLLF), 105-125 (PIFF…TALL), 137-157 (IIFT…LCSS), and 175-195 (FGIA…SIAF).

The protein belongs to the UPF0056 (MarC) family.

It is found in the cell membrane. The sequence is that of UPF0056 membrane protein CPn_1010/CP_0843/CPj1010/CpB1048 from Chlamydia pneumoniae (Chlamydophila pneumoniae).